Consider the following 123-residue polypeptide: Protein TraJ (123 aa).

Monomer.

It is found in the cytoplasm. In terms of biological role, transfer of plasmid RP4 during bacterial conjugation requires the plasmid-encoded TraJ protein, which binds to a 19-base pair invert sequence repetition within the transfer origin. TraJ protein is bound to only one side of the DNA helix. This nucleoprotein structure is the initial complex in the pathway to assemble a functional relaxosome. This chain is Protein TraJ (traJ), found in Escherichia coli.